The primary structure comprises 31 residues: Cytochrome b6-f complex subunit 6 (31 aa).

Residues 4-24 (ITSYFGFLLAALTITSVLFIG) traverse the membrane as a helical segment.

The protein belongs to the PetL family. In terms of assembly, the 4 large subunits of the cytochrome b6-f complex are cytochrome b6, subunit IV (17 kDa polypeptide, PetD), cytochrome f and the Rieske protein, while the 4 small subunits are PetG, PetL, PetM and PetN. The complex functions as a dimer.

The protein localises to the plastid. It is found in the chloroplast thylakoid membrane. Functionally, component of the cytochrome b6-f complex, which mediates electron transfer between photosystem II (PSII) and photosystem I (PSI), cyclic electron flow around PSI, and state transitions. PetL is important for photoautotrophic growth as well as for electron transfer efficiency and stability of the cytochrome b6-f complex. This is Cytochrome b6-f complex subunit 6 from Arabidopsis thaliana (Mouse-ear cress).